The sequence spans 100 residues: Urease subunit gamma (100 aa).

It belongs to the urease gamma subunit family. In terms of assembly, heterotrimer of UreA (gamma), UreB (beta) and UreC (alpha) subunits. Three heterotrimers associate to form the active enzyme.

It is found in the cytoplasm. It carries out the reaction urea + 2 H2O + H(+) = hydrogencarbonate + 2 NH4(+). Its pathway is nitrogen metabolism; urea degradation; CO(2) and NH(3) from urea (urease route): step 1/1. This is Urease subunit gamma from Haemophilus influenzae (strain PittEE).